A 68-amino-acid polypeptide reads, in one-letter code: Figainin 1 (68 aa).

Positions 1-22 are cleaved as a signal peptide; the sequence is MAFLKKSLFLVLFLGLVSLSIG. Positions 23–45 are disordered; it reads EEEKREEEEKNEEGANQEENAEN. Positions 23–47 are excised as a propeptide; sequence EEEKREEEEKNEEGANQEENAENKE. Acidic residues predominate over residues 26–42; sequence KREEEEKNEEGANQEEN. Lys-67 is modified (lysine amide).

In terms of tissue distribution, expressed by the skin glands.

The protein localises to the secreted. Functionally, antimicrobial peptide that displays antibacterial and antiprotozoal activity. Exhibits antibacterial activity against the Gram-positive bacteria S.epidermidis ATCC 12228 (MIC=2 uM), E.casseliflavus ATCC 700327 (MIC=16 uM), S.aureus ATCC 25923 (MIC=4 uM) and E.faecalis ATCC 29212 (MIC=8 uM), and the Gram-negative bacteria E.coli ATCC 25922 (MIC=16 uM) and K.pneumoniae ATCC 13883 (MIC=4 uM). Displays antiprotozoal activity against the epimastigote form of T.cruzi (IC(50)=15.9 uM). Does not show antimicrobial activity against the Gram-negative bacterium P.aeruginosa ATCC 27853, or the fungi C.albicans ATCC 90028 and C.parapsilosis ATCC 22019. Shows high cytolytic activity against human erythrocytes (HC(50)=10 uM), and displays anti-proliferative effects against various cancer cell lines including MCF-7 breast cancer cells (IC(50)=13.7 uM), HeLa cervical adenocarcinoma cells (IC(50)=11.1 uM) and B16F10 murine melanoma cells (IC(50)=10.5 uM). This chain is Figainin 1, found in Boana raniceps (Chaco tree frog).